The sequence spans 249 residues: Ribonuclease HII (249 aa).

The 192-residue stretch at 30–221 (GPVAGVDEVG…VRRLVMDGEP (192 aa)) folds into the RNase H type-2 domain. The a divalent metal cation site is built by D36, E37, and D130.

Belongs to the RNase HII family. Mn(2+) is required as a cofactor. It depends on Mg(2+) as a cofactor.

Its subcellular location is the cytoplasm. It catalyses the reaction Endonucleolytic cleavage to 5'-phosphomonoester.. Functionally, endonuclease that specifically degrades the RNA of RNA-DNA hybrids. This chain is Ribonuclease HII, found in Mycolicibacterium vanbaalenii (strain DSM 7251 / JCM 13017 / BCRC 16820 / KCTC 9966 / NRRL B-24157 / PYR-1) (Mycobacterium vanbaalenii).